We begin with the raw amino-acid sequence, 315 residues long: uncharacterized protein (315 aa).

The next 3 helical transmembrane spans lie at 19–39, 56–76, and 81–101; these read IGAG…GNVF, TVLV…LHSF, and PLKK…ISLI. The segment covering 154–171 has biased composition (polar residues); it reads EDSASSGRTSSSVNQPIQ. The tract at residues 154 to 214 is disordered; the sequence is EDSASSGRTS…EREARAQEHD (61 aa). A compositionally biased stretch (basic and acidic residues) spans 203 to 214; that stretch reads GGEREARAQEHD.

The protein belongs to the ATPase C chain family.

It localises to the mitochondrion membrane. This is an uncharacterized protein from Arabidopsis thaliana (Mouse-ear cress).